We begin with the raw amino-acid sequence, 89 residues long: Probable oxaloacetate decarboxylase gamma chain (89 aa).

The helical transmembrane segment at 13-33 (LMLSGMGFVITFLLILIWAIT) threads the bilayer.

The protein belongs to the OadG family. In terms of assembly, heterotrimer of an alpha, a beta and a gamma subunit. Requires Na(+) as cofactor.

It localises to the cell membrane. The enzyme catalyses oxaloacetate + 2 Na(+)(in) + H(+) = pyruvate + 2 Na(+)(out) + CO2. Catalyzes the decarboxylation of oxaloacetate coupled to Na(+) translocation. The polypeptide is Probable oxaloacetate decarboxylase gamma chain (Actinobacillus succinogenes (strain ATCC 55618 / DSM 22257 / CCUG 43843 / 130Z)).